Consider the following 90-residue polypeptide: Probable Fe(2+)-trafficking protein (90 aa).

Belongs to the Fe(2+)-trafficking protein family.

Its function is as follows. Could be a mediator in iron transactions between iron acquisition and iron-requiring processes, such as synthesis and/or repair of Fe-S clusters in biosynthetic enzymes. The sequence is that of Probable Fe(2+)-trafficking protein from Paracidovorax citrulli (strain AAC00-1) (Acidovorax citrulli).